The primary structure comprises 179 residues: Large ribosomal subunit protein uL5 (179 aa).

The protein belongs to the universal ribosomal protein uL5 family. In terms of assembly, part of the 50S ribosomal subunit; part of the 5S rRNA/L5/L18/L25 subcomplex. Contacts the 5S rRNA and the P site tRNA. Forms a bridge to the 30S subunit in the 70S ribosome.

This is one of the proteins that bind and probably mediate the attachment of the 5S RNA into the large ribosomal subunit, where it forms part of the central protuberance. In the 70S ribosome it contacts protein S13 of the 30S subunit (bridge B1b), connecting the 2 subunits; this bridge is implicated in subunit movement. Contacts the P site tRNA; the 5S rRNA and some of its associated proteins might help stabilize positioning of ribosome-bound tRNAs. The polypeptide is Large ribosomal subunit protein uL5 (Cronobacter sakazakii (strain ATCC BAA-894) (Enterobacter sakazakii)).